A 327-amino-acid chain; its full sequence is MSHVDTLLAEGLAAIAAVQDLNELEQVKARYLGKTGQITELLKQLGKLPPEEKKAAGATINVAKQQFEAAHNARRDALNAARLEAQLAAEALDVTLPGRGAGVGGLHPVTLTLERIASLFRSMGFEVADGPEIEDDFHNFQALNIPADHPARAMQDTFYVEGGNVLRTHTSPIQVRHMLANQPPIKIIAPGRVYRVDSDATHSPMFHQMEGLWVDDGVSFADLKATLTDFLRRFFERDDLQVRFRPSFFPFTEPSAEIDVLGKNGWLEVGGCGMVHPNVLRNVNIDPERYTGFAFGIGLDRFAMLRYGVTDLRLFFENDLSFLKQFN.

Glutamate 253 lines the Mg(2+) pocket.

It belongs to the class-II aminoacyl-tRNA synthetase family. Phe-tRNA synthetase alpha subunit type 1 subfamily. As to quaternary structure, tetramer of two alpha and two beta subunits. It depends on Mg(2+) as a cofactor.

It localises to the cytoplasm. The catalysed reaction is tRNA(Phe) + L-phenylalanine + ATP = L-phenylalanyl-tRNA(Phe) + AMP + diphosphate + H(+). The polypeptide is Phenylalanine--tRNA ligase alpha subunit (Laribacter hongkongensis (strain HLHK9)).